The primary structure comprises 380 residues: Acid phosphatase-like protein XcAP-3 (380 aa).

The signal sequence occupies residues methionine 1–alanine 19. Disulfide bonds link cysteine 147–cysteine 374, cysteine 167–cysteine 221, and cysteine 347–cysteine 351.

The protein belongs to the histidine acid phosphatase family.

It localises to the secreted. In terms of biological role, probably modulates blood feeding of fleas on vertebrate species by binding and sequestering different mediators involved in the host response. Binds histamine. Binds leukotriene C4. Does not bind serotonin, adrenaline, noradrenaline, leukotriene B4, leukotriene D4, leukotriene E4, ADP, and stable analogs of thromboxane A2: U-46619 and cTXA2. The chain is Acid phosphatase-like protein XcAP-3 from Xenopsylla cheopis (Oriental rat flea).